The chain runs to 67 residues: Sec-independent protein translocase protein TatA (67 aa).

Residues 1-21 (MMPGPFELIVILVIVLLLFGG) form a helical membrane-spanning segment.

This sequence belongs to the TatA/E family. As to quaternary structure, the Tat system comprises two distinct complexes: a TatABC complex, containing multiple copies of TatA, TatB and TatC subunits, and a separate TatA complex, containing only TatA subunits. Substrates initially bind to the TatABC complex, which probably triggers association of the separate TatA complex to form the active translocon.

The protein resides in the cell inner membrane. Part of the twin-arginine translocation (Tat) system that transports large folded proteins containing a characteristic twin-arginine motif in their signal peptide across membranes. TatA could form the protein-conducting channel of the Tat system. The sequence is that of Sec-independent protein translocase protein TatA from Ruthia magnifica subsp. Calyptogena magnifica.